We begin with the raw amino-acid sequence, 565 residues long: Galactoside 2-alpha-L-fucosyltransferase (565 aa).

At 1 to 43 (MNMLIKRVIAIKNPRGDDNNNNKLSDLETLTDKCTTCPLTLMR) the chain is on the cytoplasmic side. Residues 44-64 (VMAFFVVSFMLFSVLFSLSVV) form a helical; Signal-anchor for type II membrane protein membrane-spanning segment. Residues 65–565 (LRDPPSDAAI…MSWGLKLVDN (501 aa)) are Lumenal-facing. N-linked (GlcNAc...) asparagine glycans are attached at residues Asn-159, Asn-263, Asn-407, and Asn-509.

This sequence belongs to the glycosyltransferase 37 family.

Its subcellular location is the golgi apparatus. The protein localises to the golgi stack membrane. It participates in protein modification; protein glycosylation. Functionally, involved in cell wall biosynthesis. Adds the terminal fucosyl residue on xyloglucan side chains. The sequence is that of Galactoside 2-alpha-L-fucosyltransferase (FT1) from Pisum sativum (Garden pea).